We begin with the raw amino-acid sequence, 333 residues long: tRNA(Ile)-lysidine synthase (333 aa).

25–30 serves as a coordination point for ATP; that stretch reads SGGPDS.

This sequence belongs to the tRNA(Ile)-lysidine synthase family.

It is found in the cytoplasm. The catalysed reaction is cytidine(34) in tRNA(Ile2) + L-lysine + ATP = lysidine(34) in tRNA(Ile2) + AMP + diphosphate + H(+). Its function is as follows. Ligates lysine onto the cytidine present at position 34 of the AUA codon-specific tRNA(Ile) that contains the anticodon CAU, in an ATP-dependent manner. Cytidine is converted to lysidine, thus changing the amino acid specificity of the tRNA from methionine to isoleucine. The chain is tRNA(Ile)-lysidine synthase from Ureaplasma parvum serovar 3 (strain ATCC 700970).